The sequence spans 408 residues: Probable pectate lyase 18 (408 aa).

Positions 1–24 are cleaved as a signal peptide; that stretch reads MKMQTKKLFITIVSFLLYAPLFLS. N-linked (GlcNAc...) asparagine glycosylation occurs at N42. Ca(2+) contacts are provided by D206, D230, and D234. Residue R286 is part of the active site.

This sequence belongs to the polysaccharide lyase 1 family. It depends on Ca(2+) as a cofactor. In terms of tissue distribution, expressed in flowers, but not in leaves.

It carries out the reaction Eliminative cleavage of (1-&gt;4)-alpha-D-galacturonan to give oligosaccharides with 4-deoxy-alpha-D-galact-4-enuronosyl groups at their non-reducing ends.. It participates in glycan metabolism; pectin degradation; 2-dehydro-3-deoxy-D-gluconate from pectin: step 2/5. In Arabidopsis thaliana (Mouse-ear cress), this protein is Probable pectate lyase 18.